Here is a 226-residue protein sequence, read N- to C-terminus: PKHD-type hydroxylase Bind_0236 (226 aa).

Residues 78-178 (TIFPPLFNRY…RIASFFWIQS (101 aa)) enclose the Fe2OG dioxygenase domain. Positions 96, 98, and 159 each coordinate Fe cation. R169 provides a ligand contact to 2-oxoglutarate.

It depends on Fe(2+) as a cofactor. L-ascorbate serves as cofactor.

This chain is PKHD-type hydroxylase Bind_0236, found in Beijerinckia indica subsp. indica (strain ATCC 9039 / DSM 1715 / NCIMB 8712).